The following is a 399-amino-acid chain: Elongation factor Tu (399 aa).

A tr-type G domain is found at 10 to 209 (KPHVNIGTIG…AVDDYIPTPA (200 aa)). Residues 19 to 26 (GHVDHGKT) form a G1 region. 19–26 (GHVDHGKT) serves as a coordination point for GTP. A Mg(2+)-binding site is contributed by Thr26. A G2 region spans residues 60–64 (GITIA). A G3 region spans residues 81-84 (DCPG). GTP is bound by residues 81–85 (DCPGH) and 136–139 (NKAD). Residues 136–139 (NKAD) form a G4 region. The segment at 174–176 (SAL) is G5.

Belongs to the TRAFAC class translation factor GTPase superfamily. Classic translation factor GTPase family. EF-Tu/EF-1A subfamily. As to quaternary structure, monomer.

The protein resides in the cytoplasm. The catalysed reaction is GTP + H2O = GDP + phosphate + H(+). In terms of biological role, GTP hydrolase that promotes the GTP-dependent binding of aminoacyl-tRNA to the A-site of ribosomes during protein biosynthesis. The polypeptide is Elongation factor Tu (Campylobacter lari (strain RM2100 / D67 / ATCC BAA-1060)).